A 507-amino-acid chain; its full sequence is MQLTYFLFQVAVALLAIVTYILHRKLTYFKRRGIPYDKPHPLRGNMEGYKKTRTVHEIHQEYYNKYRNSKAPFVGFYLFQKPAAFVIDLELAKQILIKNFSNFTDKGIYYNEKDDPMSAHLFNLDGPQWRLLRSKLSSTFTSGKMKFMYPTVVSVAEEFMAVMHEKVSENSILDVRDLVARFTVDVIGTCAFGIKCNSLRDEKAEFLHFGRRALLDSRHGNLVSGLMRSYPNLARRLGLCRNTAQIQEFYQRIVKETVTLREKENIKRNDFMDMLIGLKNQKNMTLENGEVVKGLTMDEIVAQAFVFFIAGFDTSSSTMGFALYELAKNPSIQDKVRAELGQVLEQHDQKFTYECIKDLKYLDQVINETLRHYTIVPNVDRVAAKRFVVPGNPKFVIEAGQSVIIPSSAIHHDPSIYPEPNEFRPERFSPEESAKRPSVAWLPFGEGPRNCIGLRFGQMQARIGLAMLIKNFTFSPCSATPDPLTFDPHSAILLGIKGGIQLKVEAI.

A heme-binding site is contributed by C451.

The protein belongs to the cytochrome P450 family. Heme serves as cofactor.

It localises to the endoplasmic reticulum membrane. The protein localises to the microsome membrane. May be involved in the metabolism of insect hormones and in the breakdown of synthetic insecticides. The polypeptide is Probable cytochrome P450 6a18 (Cyp6a18) (Drosophila melanogaster (Fruit fly)).